A 248-amino-acid polypeptide reads, in one-letter code: HTH-type transcriptional regulator GgaR (248 aa).

The 69-residue stretch at 22 to 90 (TPLYIKFAET…RGYGTQINNI (69 aa)) folds into the HTH gntR-type domain. Positions 50 to 69 (ERDLSQLTGVSRITVRKAMQ) form a DNA-binding region, H-T-H motif.

Its activity is regulated as follows. Senses ADP-glucose (ADPG), which is the substrate for glycogen elongation, as an effector. In the presence of ADPG, GgaR becomes inactive and derepresses the yegTUV operon, leading to glycogen accumulation. In contrast, in the absence of glucose, the concentration of ADPG decreases, GgaR becomes active, and glycogen accumulation is repressed. In terms of biological role, transcriptional regulator that regulates glycogen accumulation in response to the amount of glucose available to the cell. Acts as a repressor of the yegTUV operon, which may be involved in glycogen accumulation. This chain is HTH-type transcriptional regulator GgaR, found in Escherichia coli O6:H1 (strain CFT073 / ATCC 700928 / UPEC).